Consider the following 380-residue polypeptide: Putative heat stress transcription factor B-4a (380 aa).

The interval 216–245 is hydrophobic repeat HR-A/B; it reads LLRGNAALVQELAHMRKLYSDIIYFVQNHV. Disordered stretches follow at residues 268–296 and 314–380; these read PAGG…TVAE and INEV…VSPP. Over residues 278-296 the composition is skewed to low complexity; it reads VRGASGRSATSSSSLTVAE. The Nuclear localization signal motif lies at 346-348; sequence RKR.

This sequence belongs to the HSF family. Class B subfamily. In terms of assembly, homotrimer. Exhibits temperature-dependent phosphorylation.

It localises to the nucleus. Transcriptional regulator that specifically binds DNA of heat shock promoter elements (HSE). This Oryza sativa subsp. japonica (Rice) protein is Putative heat stress transcription factor B-4a (HSFB4A).